The primary structure comprises 227 residues: 2,3-bisphosphoglycerate-dependent phosphoglycerate mutase (227 aa).

Substrate is bound by residues 7–14, 20–21, Arg59, 86–89, Lys97, 113–114, and 182–183; these read RHGFSEWN, TG, ERHY, RR, and GN. The active-site Tele-phosphohistidine intermediate is His8. Glu86 acts as the Proton donor/acceptor in catalysis.

The protein belongs to the phosphoglycerate mutase family. BPG-dependent PGAM subfamily. Homodimer.

The catalysed reaction is (2R)-2-phosphoglycerate = (2R)-3-phosphoglycerate. It functions in the pathway carbohydrate degradation; glycolysis; pyruvate from D-glyceraldehyde 3-phosphate: step 3/5. Functionally, catalyzes the interconversion of 2-phosphoglycerate and 3-phosphoglycerate. This chain is 2,3-bisphosphoglycerate-dependent phosphoglycerate mutase, found in Pasteurella multocida (strain Pm70).